Consider the following 387-residue polypeptide: Acyltransferase MdmB (387 aa).

The next 10 helical transmembrane spans lie at 8–28 (LPSL…CHIA), 45–65 (ITTL…FVLA), 85–105 (IYPL…SLAE), 139–161 (TPSW…YRLV), 170–190 (WWCA…TSQF), 209–229 (CWLP…ALIL), 236–256 (GPGV…TQVV), 258–278 (PMFT…TALA), 292–312 (AVLV…FMVI), and 336–356 (ALAL…HTVV).

Belongs to the acyltransferase 3 family.

Its subcellular location is the cell membrane. In terms of biological role, catalyzes the acylation of the mycaminose sugar during midecamycin biosynthesis. This chain is Acyltransferase MdmB (mdmB), found in Streptomyces mycarofaciens.